The chain runs to 369 residues: Translocating chain-associated membrane protein 1-like 1 (369 aa).

At 1–29 (MGLRKKSTKNPPVLSQEFILQNHADIVSC) the chain is on the cytoplasmic side. Residues 30 to 50 (VGMFFLLGLVFEGTAEASIVF) traverse the membrane as a helical segment. At 51–81 (LTLQHSVAVPAAEEQATGSKSLYYYGVKDLA) the chain is on the lumenal side. Residues 82–102 (TVFFYMLVAIIIHATIQEYVL) traverse the membrane as a helical segment. Topologically, residues 103–121 (DKINKRMQFTKAKQNKFNE) are cytoplasmic. Positions 117 to 326 (NKFNESGQFS…TLWLQRWVED (210 aa)) constitute a TLC domain. Residues 122 to 142 (SGQFSVFYFFSCIWGTFILIS) traverse the membrane as a helical segment. At 143–164 (ENCLSDPTLIWKARPHSMMTFQ) the chain is on the lumenal side. A helical transmembrane segment spans residues 165-185 (MKFFYISQLAYWFHAFPELYF). Over 186–196 (QKTKKQDIPRQ) the chain is Cytoplasmic. Residues 197-215 (LVYIGLHLFHITGAYLLYL) form a helical membrane-spanning segment. The Lumenal segment spans residues 216-219 (NHLG). The chain crosses the membrane as a helical span at residues 220 to 242 (LLLLVLHYFVELLSHMCGLFYFS). Over 243-249 (DEKYQKG) the chain is Cytoplasmic. Residues 250–270 (ISLWAIVFILGRLVTLIVSVL) traverse the membrane as a helical segment. The Lumenal portion of the chain corresponds to 271 to 297 (TVGFHLAGSQNRNPDALTGNVNVLAAK). The chain crosses the membrane as a helical span at residues 298 to 318 (IAVLSSSCTIQAYVTWNLITL). The Cytoplasmic segment spans residues 319–369 (WLQRWVEDSNIQASCMKKKRSRSSKKRTENGVGVETSNRVDCPPKRKEKSS). The interval 335–369 (KKKRSRSSKKRTENGVGVETSNRVDCPPKRKEKSS) is disordered. The segment covering 360-369 (CPPKRKEKSS) has biased composition (basic and acidic residues).

Belongs to the TRAM family.

Its subcellular location is the endoplasmic reticulum membrane. Its function is as follows. Stimulatory or required for the translocation of secretory proteins across the ER membrane. The protein is Translocating chain-associated membrane protein 1-like 1 (TRAM1L1) of Homo sapiens (Human).